Here is a 157-residue protein sequence, read N- to C-terminus: Increased recombination centers protein 23 (157 aa).

The Cytoplasmic portion of the chain corresponds to 1–6; the sequence is MIEALE. A helical membrane pass occupies residues 7 to 29; that stretch reads IVLLLVIQSLQYICRTCIAFLLI. Topologically, residues 30-33 are lumenal; it reads PFLG. The chain crosses the membrane as a helical span at residues 34 to 56; sequence LYAFDLFLYVYRMILYLSQMFNY. Residues 57–157 lie on the Cytoplasmic side of the membrane; the sequence is KRKLGRSKTN…EEGYYIAGSI (101 aa).

Its subcellular location is the endoplasmic reticulum membrane. Its function is as follows. Is probably involved in a pathway contributing to genomic integrity. In Saccharomyces cerevisiae (strain ATCC 204508 / S288c) (Baker's yeast), this protein is Increased recombination centers protein 23 (IRC23).